We begin with the raw amino-acid sequence, 491 residues long: Glutathione synthetase GSH2 (491 aa).

Arg128 is a substrate binding site. An ATP-binding site is contributed by Glu146. Mg(2+) contacts are provided by Glu146 and Asn148. Residues 150–153, 228–230, Gln234, and 285–288 each bind substrate; these read VSVS, ERN, and RTGY. ATP contacts are provided by residues Lys324, 382–391, Tyr393, 415–418, and Glu442; these read KPQREGGGNN and MELI. Residue Glu386 participates in Mg(2+) binding. Arg467 lines the substrate pocket. Residues Lys469 and Glu475 each contribute to the ATP site. 478-479 is a substrate binding site; the sequence is VA.

This sequence belongs to the eukaryotic GSH synthase family. Homodimer. Requires Mg(2+) as cofactor.

The enzyme catalyses gamma-L-glutamyl-L-cysteine + glycine + ATP = glutathione + ADP + phosphate + H(+). It functions in the pathway sulfur metabolism; glutathione biosynthesis; glutathione from L-cysteine and L-glutamate: step 2/2. This Saccharomyces cerevisiae (strain ATCC 204508 / S288c) (Baker's yeast) protein is Glutathione synthetase GSH2 (GSH2).